The primary structure comprises 644 residues: Acetyl-coenzyme A synthetase (644 aa).

CoA is bound by residues 189-192 and Thr307; that span reads RGGK. ATP contacts are provided by residues 383-385, 407-412, Asp496, and Arg511; these read GEP and DTWWQT. Ser519 contributes to the CoA binding site. An ATP-binding site is contributed by Arg522. 3 residues coordinate Mg(2+): Val533, His535, and Val538. A CoA-binding site is contributed by Arg580. Residue Lys605 is modified to N6-acetyllysine.

The protein belongs to the ATP-dependent AMP-binding enzyme family. Mg(2+) serves as cofactor. In terms of processing, acetylated. Deacetylation by the SIR2-homolog deacetylase activates the enzyme.

The enzyme catalyses acetate + ATP + CoA = acetyl-CoA + AMP + diphosphate. Functionally, catalyzes the conversion of acetate into acetyl-CoA (AcCoA), an essential intermediate at the junction of anabolic and catabolic pathways. AcsA undergoes a two-step reaction. In the first half reaction, AcsA combines acetate with ATP to form acetyl-adenylate (AcAMP) intermediate. In the second half reaction, it can then transfer the acetyl group from AcAMP to the sulfhydryl group of CoA, forming the product AcCoA. This chain is Acetyl-coenzyme A synthetase, found in Rubrobacter xylanophilus (strain DSM 9941 / JCM 11954 / NBRC 16129 / PRD-1).